A 202-amino-acid chain; its full sequence is Superoxide dismutase [Mn] (202 aa).

Mn(2+) contacts are provided by His-27, His-82, Asp-164, and His-168.

This sequence belongs to the iron/manganese superoxide dismutase family. As to quaternary structure, homodimer. Mn(2+) is required as a cofactor.

The catalysed reaction is 2 superoxide + 2 H(+) = H2O2 + O2. Its function is as follows. Destroys superoxide anion radicals which are normally produced within the cells and which are toxic to biological systems. In Listeria ivanovii, this protein is Superoxide dismutase [Mn] (sodA).